A 500-amino-acid polypeptide reads, in one-letter code: Lysine--tRNA ligase (500 aa).

2 residues coordinate Mg(2+): Glu-402 and Glu-409.

This sequence belongs to the class-II aminoacyl-tRNA synthetase family. In terms of assembly, homodimer. Mg(2+) is required as a cofactor.

It is found in the cytoplasm. It catalyses the reaction tRNA(Lys) + L-lysine + ATP = L-lysyl-tRNA(Lys) + AMP + diphosphate. The chain is Lysine--tRNA ligase from Buchnera aphidicola subsp. Baizongia pistaciae (strain Bp).